Here is a 263-residue protein sequence, read N- to C-terminus: Neuferricin (263 aa).

Positions 1–22 (MLRICGLGVVLSLAVAAVAVMA) are cleaved as a signal peptide. One can recognise a Cytochrome b5 heme-binding domain in the interval 35–134 (IRLFLPEELA…KNYVFVGRLV (100 aa)). Residues 220 to 249 (VRTTGPPSDQQDNPRHSNHGDLDNPNLEEY) are disordered. Positions 231–241 (DNPRHSNHGDL) are enriched in basic and acidic residues.

Belongs to the cytochrome b5 family. MAPR subfamily. Expressed in various tissues including brain, heart, adrenal gland, and kidney. In the brain, mainly expressed in pyramidal cells around the CA3 region of Ammon horn in hippocampus. Present in brain (at protein level).

It is found in the secreted. Functionally, heme-binding protein which promotes neuronal but not astrocyte differentiation. This is Neuferricin from Mus musculus (Mouse).